A 317-amino-acid chain; its full sequence is Beta-ketoacyl-[acyl-carrier-protein] synthase III (317 aa).

Catalysis depends on residues Cys-112 and His-244. Residues 245-249 (QANLR) are ACP-binding. Asn-274 is a catalytic residue.

It belongs to the thiolase-like superfamily. FabH family. In terms of assembly, homodimer.

The protein localises to the cytoplasm. It catalyses the reaction malonyl-[ACP] + acetyl-CoA + H(+) = 3-oxobutanoyl-[ACP] + CO2 + CoA. Its pathway is lipid metabolism; fatty acid biosynthesis. Catalyzes the condensation reaction of fatty acid synthesis by the addition to an acyl acceptor of two carbons from malonyl-ACP. Catalyzes the first condensation reaction which initiates fatty acid synthesis and may therefore play a role in governing the total rate of fatty acid production. Possesses both acetoacetyl-ACP synthase and acetyl transacylase activities. Its substrate specificity determines the biosynthesis of branched-chain and/or straight-chain of fatty acids. In Salmonella paratyphi B (strain ATCC BAA-1250 / SPB7), this protein is Beta-ketoacyl-[acyl-carrier-protein] synthase III.